The following is a 436-amino-acid chain: Peptidase B (436 aa).

Positions 201 and 206 each coordinate Mn(2+). The active site involves K213. Mn(2+)-binding residues include D224, D283, and E285. The active site involves R287.

It belongs to the peptidase M17 family. In terms of assembly, homohexamer. It depends on Mn(2+) as a cofactor.

The protein localises to the cytoplasm. The catalysed reaction is Release of an N-terminal amino acid, Xaa, from a peptide or arylamide. Xaa is preferably Glu or Asp but may be other amino acids, including Leu, Met, His, Cys and Gln.. Probably plays an important role in intracellular peptide degradation. The chain is Peptidase B from Pectobacterium carotovorum subsp. carotovorum (strain PC1).